The following is a 180-amino-acid chain: Segregation and condensation protein B (180 aa).

The protein belongs to the ScpB family. As to quaternary structure, homodimer. Homodimerization may be required to stabilize the binding of ScpA to the Smc head domains. Component of a cohesin-like complex composed of ScpA, ScpB and the Smc homodimer, in which ScpA and ScpB bind to the head domain of Smc. The presence of the three proteins is required for the association of the complex with DNA.

It localises to the cytoplasm. In terms of biological role, participates in chromosomal partition during cell division. May act via the formation of a condensin-like complex containing Smc and ScpA that pull DNA away from mid-cell into both cell halves. The polypeptide is Segregation and condensation protein B (Staphylococcus epidermidis (strain ATCC 35984 / DSM 28319 / BCRC 17069 / CCUG 31568 / BM 3577 / RP62A)).